A 204-amino-acid polypeptide reads, in one-letter code: Imidazoleglycerol-phosphate dehydratase (204 aa).

It belongs to the imidazoleglycerol-phosphate dehydratase family.

Its subcellular location is the cytoplasm. The enzyme catalyses D-erythro-1-(imidazol-4-yl)glycerol 3-phosphate = 3-(imidazol-4-yl)-2-oxopropyl phosphate + H2O. The protein operates within amino-acid biosynthesis; L-histidine biosynthesis; L-histidine from 5-phospho-alpha-D-ribose 1-diphosphate: step 6/9. This Rhodococcus opacus (strain B4) protein is Imidazoleglycerol-phosphate dehydratase.